The following is a 471-amino-acid chain: 3-isopropylmalate dehydratase large subunit (471 aa).

[4Fe-4S] cluster is bound by residues cysteine 347, cysteine 407, and cysteine 410.

The protein belongs to the aconitase/IPM isomerase family. LeuC type 1 subfamily. As to quaternary structure, heterodimer of LeuC and LeuD. Requires [4Fe-4S] cluster as cofactor.

It catalyses the reaction (2R,3S)-3-isopropylmalate = (2S)-2-isopropylmalate. It participates in amino-acid biosynthesis; L-leucine biosynthesis; L-leucine from 3-methyl-2-oxobutanoate: step 2/4. Its function is as follows. Catalyzes the isomerization between 2-isopropylmalate and 3-isopropylmalate, via the formation of 2-isopropylmaleate. The polypeptide is 3-isopropylmalate dehydratase large subunit (Anoxybacillus flavithermus (strain DSM 21510 / WK1)).